Here is a 144-residue protein sequence, read N- to C-terminus: MAKRGGKRTVGVPYRFHVTPGIFMNSLVPVADNSGAKLVRVIGVVGHYSKTVHRRIPGAGVGDMVVVVVKEGKPELRRQIFRGIVVRQRRPYRRPDGTWVAFEDNAVVIVTPEGDPKGSEIHGPVAMEATLRWPTIANLASIVV.

Belongs to the universal ribosomal protein uL14 family. In terms of assembly, part of the 50S ribosomal subunit. Forms a cluster with proteins L3 and L24e, part of which may contact the 16S rRNA in 2 intersubunit bridges.

Its function is as follows. Binds to 23S rRNA. Forms part of two intersubunit bridges in the 70S ribosome. The protein is Large ribosomal subunit protein uL14 of Pyrobaculum arsenaticum (strain DSM 13514 / JCM 11321 / PZ6).